Here is a 1175-residue protein sequence, read N- to C-terminus: Potassium/sodium hyperpolarization-activated cyclic nucleotide-gated channel 4 (1175 aa).

The Cytoplasmic portion of the chain corresponds to 1–259 (MDKLPPSMRK…SAGFWIIHPY (259 aa)). The segment at 17–186 (QQVGAKAWIM…SSCGEQRPAD (170 aa)) is disordered. A compositionally biased stretch (acidic residues) spans 26-36 (MDEEEDAEEEG). A compositionally biased stretch (low complexity) spans 60–75 (PSAAAAAAGGAESRGA). The segment covering 111–126 (SRGGGGGGGSTGGGSH) has biased composition (gly residues). Positions 128–140 (HLHDSAEERRLIA) are enriched in basic and acidic residues. Phosphoserine is present on Ser-145. Positions 162–175 (PGAPAPPAASPPQV) are enriched in pro residues. Residues 260-288 (SDFRFYWDLTMLLLMVGNLIIIPVGITFF) form a helical membrane-spanning segment. The Extracellular portion of the chain corresponds to 289–292 (KDEN). Residues 293-316 (TTPWIVFNVVSDTFFLIDLVLNFR) form a helical membrane-spanning segment. Residues 317–329 (TGIVVEDNTDIIL) lie on the Cytoplasmic side of the membrane. Residues 330–352 (DPRRIKMKYLKSWFVVDFVSSIP) traverse the membrane as a helical segment. Residues 353–374 (VDYIFLIVETRIDSEVYKTARA) are Extracellular-facing. Residues 375-410 (LRIVRFTKILSLLRLLRLSRLIRYIHQWEEIFHMTY) form a helical; Voltage-sensor membrane-spanning segment. The Cytoplasmic segment spans residues 411–413 (DLA). The helical transmembrane segment at 414 to 444 (SAVVRIVNLIGMMLLLCHWDGCLQFLVPMLQ) threads the bilayer. At 445-449 (DFPDD) the chain is on the extracellular side. Positions 450–478 (CWVSLNNMVNNSWGKQYSYALFKAMSHML) form an intramembrane region, pore-forming. Topologically, residues 479-488 (CIGYGRQAPM) are extracellular. The chain crosses the membrane as a helical span at residues 489–521 (GMSDVWLTMLSMIVGATCYAMFIGHATALIQSL). Over 522 to 1175 (DSSRRQYQEK…PVRSKLPSNL (654 aa)) the chain is Cytoplasmic. Residues Tyr-560, Lys-563, Phe-565, and Glu-567 each contribute to the 3',5'-cyclic GMP site. The 3',5'-cyclic AMP site is built by Gly-660, Glu-661, Cys-663, Arg-670, Thr-671, Val-674, and Arg-711. 2 disordered regions span residues 801-820 (AIFR…AGQT) and 830-1175 (LAPS…PSNL). 4 stretches are compositionally biased toward low complexity: residues 839–854 (SPAS…SSAS), 900–912 (LGGS…SPLL), 948–966 (SPTS…LSPG), and 984–1004 (RLPF…SPRG). The span at 1038 to 1050 (ASSPPPPPPPPAP) shows a compositional bias: pro residues. Phosphoserine occurs at positions 1089 and 1093. A compositionally biased stretch (pro residues) spans 1102–1114 (PPFPRAPGRPPGA).

It belongs to the potassium channel HCN family. As to quaternary structure, homotetramer. The channel is composed of a homo- or heterotetrameric complex of pore-forming subunits. Interacts with PEX5L with a 4:4 HCN4:PEX5L stoichiometry; reduces the effects of cAMP on the voltage-dependence and rate of activation. Interacts with IRAG1; regulates HCN4 channel activity. Interacts with IRAG2; regulates HCN4 channel activity. Post-translationally, S-palmitoylated. Highly expressed in the heart sinoatrial node (SAN). Not detected in atrium, ventricle, forebrain or cerebellum. Detected at very low levels in total brain.

The protein resides in the cell membrane. The enzyme catalyses K(+)(in) = K(+)(out). It catalyses the reaction Na(+)(in) = Na(+)(out). Its activity is regulated as follows. Activated by cAMP and to a lesser extent by cGMP and cCMP. cAMP binding causes a conformation change that leads to the assembly of an active tetramer and channel opening by shifting the voltage-dependency towards more positive voltages. Binding of cAMP removes a tonic inhibition conferred by cyclic nucleotide-binding domain (CNBD) on channel opening. Cyclic dinucleotides can modulate HCN4 channel; cyclic dinucleotides acting as potent antagonists of cAMP. Inhibited by extracellular Cs(+) ions. Auxiliary subunits can also regulate HCN4 channel. IRAG1 causes a gain-of-function by shifting HCN4 activation to more depolarized membrane potentials in the absence of cAMP. In contrast, IRAG2 causes a loss-of-function by inhibiting cAMP-dependent potentiation of HCN4 activation. In terms of biological role, hyperpolarization-activated ion channel that are permeable to Na(+) and K(+) ions with very slow activation and inactivation. Exhibits higher selectivity for K(+) over Na(+) ions. Contributes to the native pacemaker currents in heart (If) that regulate the rhythm of heart beat. Contributes to the native pacemaker currents in neurons (Ih). May mediate responses to sour stimuli. This is Potassium/sodium hyperpolarization-activated cyclic nucleotide-gated channel 4 (HCN4) from Oryctolagus cuniculus (Rabbit).